Consider the following 80-residue polypeptide: UPF0512 protein Q (80 aa).

This sequence belongs to the UPF0512 family.

This chain is UPF0512 protein Q, found in Dictyostelium discoideum (Social amoeba).